A 351-amino-acid polypeptide reads, in one-letter code: Modulator of apoptosis 1 (351 aa).

Residues 49–52 carry the LIR motif; sequence YRLL. The tract at residues 120–127 is BH3-like; it reads LSRALGHE. The tract at residues 202 to 205 is RASSF1-binding; the sequence is KRRR.

It belongs to the PNMA family. As to quaternary structure, homodimer. Under normal circumstances, held in an inactive conformation by an intramolecular interaction. Interacts with BAX. Binding to RASSF1 isoform A (RASSF1A) relieves this inhibitory interaction and allows further binding to BAX. Also binds to BCL2 and BCLX. Recruited to the TNFRSF1A and TNFRSF10A complexes in response to their respective cognate ligand, after internalization. Interacts with TRIM39. Interacts with RASSF6. Interacts with ATG8 proteins MAP1LC3A, MAP1LC3B and MAP1LC3C. Does not interact with ATG8 proteins GABARAPL1, GABARAPL2 and GABARAP. Interacts with SQSTM1; promoting dissociation of SQSTM1 inclusion bodies that sequester KEAP1. Post-translationally, ubiquitinated and degraded during mitotic exit by APC/C-Cdh1, this modification is inhibited by TRIM39. Widely expressed, with high levels in heart and brain.

The protein localises to the cytoplasm. Its subcellular location is the cytosol. It is found in the mitochondrion outer membrane. The protein resides in the extracellular vesicle membrane. In terms of biological role, retrotransposon-derived protein that forms virion-like capsids. Acts as an effector of BAX during apoptosis: enriched at outer mitochondria membrane and associates with BAX upon induction of apoptosis, facilitating BAX-dependent mitochondrial outer membrane permeabilization and apoptosis. Required for death receptor-dependent apoptosis. When associated with RASSF1, promotes BAX conformational change and translocation to mitochondrial membranes in response to TNF and TNFSF10 stimulation. Also promotes autophagy: promotes phagophore closure via association with ATG8 proteins. Acts as an inhibitor of the NFE2L2/NRF2 pathway via interaction with SQSTM1: interaction promotes dissociation of SQSTM1 inclusion bodies that sequester KEAP1, relieving inactivation of the BCR(KEAP1) complex. In Homo sapiens (Human), this protein is Modulator of apoptosis 1.